A 130-amino-acid chain; its full sequence is Small ribosomal subunit protein uS9 (130 aa).

It belongs to the universal ribosomal protein uS9 family.

This Shewanella baltica (strain OS155 / ATCC BAA-1091) protein is Small ribosomal subunit protein uS9.